A 1296-amino-acid polypeptide reads, in one-letter code: DNA-directed RNA polymerase subunit beta' (1296 aa).

C60, C62, C75, and C78 together coordinate Zn(2+). Mg(2+) contacts are provided by D535, D537, and D539. Residues C877, C954, C961, and C964 each coordinate Zn(2+).

The protein belongs to the RNA polymerase beta' chain family. In terms of assembly, the RNAP catalytic core consists of 2 alpha, 1 beta, 1 beta' and 1 omega subunit. When a sigma factor is associated with the core the holoenzyme is formed, which can initiate transcription. Mg(2+) is required as a cofactor. It depends on Zn(2+) as a cofactor.

The catalysed reaction is RNA(n) + a ribonucleoside 5'-triphosphate = RNA(n+1) + diphosphate. Functionally, DNA-dependent RNA polymerase catalyzes the transcription of DNA into RNA using the four ribonucleoside triphosphates as substrates. The sequence is that of DNA-directed RNA polymerase subunit beta' from Beutenbergia cavernae (strain ATCC BAA-8 / DSM 12333 / CCUG 43141 / JCM 11478 / NBRC 16432 / NCIMB 13614 / HKI 0122).